Consider the following 1427-residue polypeptide: MRDIFSFFEKPKDPLSFSAIRISLASPEKIREWSHGEVKKPETINYRTFKPERDGLFCAKIFGPVKDYECNCGKYKRMKHRGIVCEKCGVEVIQSKVRRERLGHISLATPVAHIWFLKSLPSRIGNMLDITLKDLEKVLYCEAYIVIDPKETGLMRGDLLSEERYLQLLDEYGDDKFSAGMGGEAILEMLKQVDVHGLAELLRTEMRAATSEAKRKKLAKRLKVVEAFRESGNRPEWMMLTVIPVLPPDLRPLVPLDGGRFATSDLNDLYRRVINRNNRLKRLLELNAPEIIIRNERRMLQEAVDALFDNGRRGKTITGPNKRPLKSLSDMLKGKQGRFRQNLLGKRVDYSGRSVIVVGPTLRLHQCGLPKKMALELFKPFIYNKLEERGYVNTIKSAKKMVEKERPEVWDILEEVISEHPVLLNRAPTLHRLGIQAFEPVLIEGKAIQLHPLVCAAFNADFDGDQMAVHVPLSVEAQMEARVLMMSTNNILSPASGKPIINPTQDIVLGLYYATRERKFEKGSYRADTLAFGEDGVAQGYLRGIYASLEEVRMAYDNGEVALHAGIRVRVPIIDDDGNPQLDEFGHVKRRIVETTVGRVIISEVLPKGVAFEYANKTLDKKALSALIDVCYRIHRNKETVLLADRLRTLGFDHAMRAGISICMDHMVIPPAKKVLLGEAQKEVERVVEQYQEGLITDGERYNKIVDIWASIADQVTTEMMAGIGKETVVDHETGKESIEPSFNPIYIMADSGARGSTQQIRQLAAMRGLMAKPSGEIIETPITANFREGLSVLQYFISTHGARKGLADTALKTANSGYLTRRLVDVAQDAVISEFDCGTLDGIRVAKLEEAGEVIQPLGDRILGRVALEDVVDPLTGEVLITANTELDEQAVRSIEDAGIEEVVIRSVLTCQLRRGVCALCYGRDLARGYRVNIGEAVGIIAAQSIGEPGTQLTMRTFHIGGTAARGKIEASYLEARTEGTVRLRRAVVQKKKDGTMVVMNRHGEIVVVDETGREREHNRLVYGAILKKADGERTKPGELLAEWDQFATPILTEVSGVVKFGDLIEGVSVQDRLDEVTGLSRKVVIESKAADVRPRISLKDPESGKTLKLPNSELEARYLLPVGAHIVAQEGDLIEAGEVIAKIPRDTTKVQDITGGLPRVAELFEARKPKDHAIISEIDGEVTFGKDTKGKRKVIITPYSPDGHALGDQAREYLIPKGKHIQVQPGDRVRAGDPLQDGPPNPHDILRVKGEKELSAWLVNEIQQVYRLQGVGINDKHIEVIVRQMLRRVRVREVGDTNFLVDEQVEKHIFEKENETVLERGGKPAIAEALLLGITKASLSTESFISASSFQETTKVLTEAAINGKTDDLRGLKENVIMGRLIPAGTGLPAYKRLQVVVEGEPVAQAPYVAPRPRPEETLTAVNEE.

4 residues coordinate Zn(2+): cysteine 70, cysteine 72, cysteine 85, and cysteine 88. Mg(2+)-binding residues include aspartate 461, aspartate 463, and aspartate 465. 4 residues coordinate Zn(2+): cysteine 838, cysteine 912, cysteine 919, and cysteine 922.

Belongs to the RNA polymerase beta' chain family. As to quaternary structure, the RNAP catalytic core consists of 2 alpha, 1 beta, 1 beta' and 1 omega subunit. When a sigma factor is associated with the core the holoenzyme is formed, which can initiate transcription. The cofactor is Mg(2+). Zn(2+) serves as cofactor.

It catalyses the reaction RNA(n) + a ribonucleoside 5'-triphosphate = RNA(n+1) + diphosphate. DNA-dependent RNA polymerase catalyzes the transcription of DNA into RNA using the four ribonucleoside triphosphates as substrates. In Sorangium cellulosum (strain So ce56) (Polyangium cellulosum (strain So ce56)), this protein is DNA-directed RNA polymerase subunit beta'.